A 354-amino-acid chain; its full sequence is S-adenosylmethionine:tRNA ribosyltransferase-isomerase (354 aa).

This sequence belongs to the QueA family. In terms of assembly, monomer.

It localises to the cytoplasm. The enzyme catalyses 7-aminomethyl-7-carbaguanosine(34) in tRNA + S-adenosyl-L-methionine = epoxyqueuosine(34) in tRNA + adenine + L-methionine + 2 H(+). Its pathway is tRNA modification; tRNA-queuosine biosynthesis. In terms of biological role, transfers and isomerizes the ribose moiety from AdoMet to the 7-aminomethyl group of 7-deazaguanine (preQ1-tRNA) to give epoxyqueuosine (oQ-tRNA). This is S-adenosylmethionine:tRNA ribosyltransferase-isomerase from Salmonella heidelberg (strain SL476).